The primary structure comprises 140 residues: Nucleoside diphosphate kinase (140 aa).

Lysine 11, phenylalanine 59, arginine 87, threonine 93, arginine 104, and asparagine 114 together coordinate ATP. The Pros-phosphohistidine intermediate role is filled by histidine 117.

The protein belongs to the NDK family. Homotetramer. The cofactor is Mg(2+).

The protein localises to the cytoplasm. The enzyme catalyses a 2'-deoxyribonucleoside 5'-diphosphate + ATP = a 2'-deoxyribonucleoside 5'-triphosphate + ADP. It catalyses the reaction a ribonucleoside 5'-diphosphate + ATP = a ribonucleoside 5'-triphosphate + ADP. Its function is as follows. Major role in the synthesis of nucleoside triphosphates other than ATP. The ATP gamma phosphate is transferred to the NDP beta phosphate via a ping-pong mechanism, using a phosphorylated active-site intermediate. This Methylorubrum populi (strain ATCC BAA-705 / NCIMB 13946 / BJ001) (Methylobacterium populi) protein is Nucleoside diphosphate kinase.